The following is a 162-amino-acid chain: Transcription antitermination protein NusB (162 aa).

This sequence belongs to the NusB family.

Involved in transcription antitermination. Required for transcription of ribosomal RNA (rRNA) genes. Binds specifically to the boxA antiterminator sequence of the ribosomal RNA (rrn) operons. In Xanthomonas euvesicatoria pv. vesicatoria (strain 85-10) (Xanthomonas campestris pv. vesicatoria), this protein is Transcription antitermination protein NusB.